The following is a 351-amino-acid chain: Gene 58 protein (351 aa).

Transmembrane regions (helical) follow at residues 14-34, 43-63, 70-90, 97-117, 133-153, 155-175, 214-234, 240-260, 268-288, 293-313, and 328-348; these read FSTGLLASSSIVWSYIFATVF, QSVLYVWSLPIVQLAAIFCAV, LGLLLLLNCGIAFLSFISWSL, LVPGLFVINFLSLMIWLIVCF, LGFLASLTIHYCFNQFEIYLT, VMFAPFFICMLFGYIGFSHVW, LICLWFLLLAMAAGCIALVMF, GVSTYLYLFMVGNFCCGSLII, AVYSVVSLTAFFLILMGGYLF, LSMLAAVMFFCYFHANGCLLY, and FILNVCMLLNALLEITVLLAQ.

It belongs to the herpesviridae BMRF2 family.

It localises to the host membrane. This is Gene 58 protein (58) from Connochaetes taurinus (Blue wildebeest).